The chain runs to 126 residues: Alpha-lactalbumin (126 aa).

The region spanning 1 to 126 (KVFEKCELSQ…CIADLDQWKC (126 aa)) is the C-type lysozyme domain. 4 disulfides stabilise this stretch: Cys-6/Cys-126, Cys-30/Cys-117, Cys-63/Cys-82, and Cys-78/Cys-96. Asn-47 carries N-linked (GlcNAc...) asparagine glycosylation. Ca(2+)-binding residues include Lys-84, Asp-87, Asp-89, Asp-92, and Asp-93.

Belongs to the glycosyl hydrolase 22 family. In terms of assembly, lactose synthase (LS) is a heterodimer of a catalytic component, beta1,4-galactosyltransferase (beta4Gal-T1) and a regulatory component, alpha-lactalbumin (LA). In terms of tissue distribution, mammary gland specific. Secreted in milk.

The protein resides in the secreted. Its function is as follows. Regulatory subunit of lactose synthase, changes the substrate specificity of galactosyltransferase in the mammary gland making glucose a good acceptor substrate for this enzyme. This enables LS to synthesize lactose, the major carbohydrate component of milk. In other tissues, galactosyltransferase transfers galactose onto the N-acetylglucosamine of the oligosaccharide chains in glycoproteins. The chain is Alpha-lactalbumin (LALBA) from Tachyglossus aculeatus aculeatus (Southeast Australian short-beaked echidna).